Reading from the N-terminus, the 495-residue chain is Protein adenylyltransferase Fic (495 aa).

A disordered region spans residues 1–23 (MGTEAEPPSPPSPPAQQQEQANP). Residues 36 to 58 (LYRLVLFFIAGSLTAWMFHAFSS) form a helical membrane-spanning segment. TPR repeat units lie at residues 121–154 (ALVS…APRH) and 155–189 (PEVL…SPSN). The short motif at 246–251 (SVGIEG) is the Inhibitory (S/T)XXXE(G/N) motif element. ATP-binding positions include Glu250 and 331–334 (VGGH). One can recognise a Fido domain in the interval 300–435 (ITIKDILELH…IRPFVRFIAD (136 aa)). Residue His378 is part of the active site. Residues 382 to 389 (DGNGRTSR), 414 to 415 (YY), and Asn422 contribute to the ATP site.

This sequence belongs to the fic family. Homodimer.

The protein resides in the membrane. It carries out the reaction L-tyrosyl-[protein] + ATP = O-(5'-adenylyl)-L-tyrosyl-[protein] + diphosphate. It catalyses the reaction L-threonyl-[protein] + ATP = 3-O-(5'-adenylyl)-L-threonyl-[protein] + diphosphate. The enzyme catalyses 3-O-(5'-adenylyl)-L-threonyl-[protein] + H2O = L-threonyl-[protein] + AMP + H(+). With respect to regulation, the side chain of Glu-250 determines which of the two opposing activities (AMPylase or de-AMPylase) will take place. In response to endoplasmic reticulum stress, mediates de-AMPylase activity. Adenylyltransferase activity is inhibited by the inhibitory helix present at the N-terminus: Glu-250 binds ATP and competes with ATP-binding at Arg-389, thereby preventing adenylyltransferase activity. In unstressed cells, disengagement of Glu-250 promotes adenylyltransferase activity. Activation dissociates ATP-binding from Glu-250, allowing ordered binding of the entire ATP moiety with the alpha-phosphate in an orientation that is productive for accepting an incoming target hydroxyl side chain. Its function is as follows. Protein that can both mediate the addition of adenosine 5'-monophosphate (AMP) to specific residues of target proteins (AMPylation), and the removal of the same modification from target proteins (de-AMPylation), depending on the context. The side chain of Glu-250 determines which of the two opposing activities (AMPylase or de-AMPylase) will take place. Acts as a key regulator of the unfolded protein response (UPR) by mediating AMPylation or de-AMPylation of Hsc70-3/BiP. In unstressed cells, acts as an adenylyltransferase by mediating AMPylation of Hsc70-3/BiP at 'Thr-518', thereby inactivating it. In response to endoplasmic reticulum stress, acts as a phosphodiesterase by mediating removal of ATP (de-AMPylation) from Hsc70-3/BiP at 'Thr-518', leading to restore HSPA5/BiP activity. This Drosophila erecta (Fruit fly) protein is Protein adenylyltransferase Fic.